The primary structure comprises 370 residues: Galactose-1-phosphate uridylyltransferase (370 aa).

Zn(2+) is bound by residues Cys-51 and Cys-54. UDP-alpha-D-glucose-binding positions include Ala-60 and 76–77; that span reads NG. His-121 serves as a coordination point for Zn(2+). Residue Asn-166 participates in UDP-alpha-D-glucose binding. His-177 contacts Zn(2+). The active-site Tele-UMP-histidine intermediate is the His-179. Residue Gln-181 coordinates UDP-alpha-D-glucose. 4 residues coordinate Fe cation: Glu-195, His-294, His-311, and His-313. Residues 326–329 and 331–332 each bind UDP-alpha-D-glucose; these read KFLV and FE.

It belongs to the galactose-1-phosphate uridylyltransferase type 1 family. In terms of assembly, homodimer. It depends on Zn(2+) as a cofactor.

It carries out the reaction alpha-D-galactose 1-phosphate + UDP-alpha-D-glucose = alpha-D-glucose 1-phosphate + UDP-alpha-D-galactose. Its pathway is carbohydrate metabolism; galactose metabolism. The polypeptide is Galactose-1-phosphate uridylyltransferase (GAL7) (Kluyveromyces lactis (strain ATCC 8585 / CBS 2359 / DSM 70799 / NBRC 1267 / NRRL Y-1140 / WM37) (Yeast)).